The sequence spans 429 residues: ATP-dependent Clp protease ATP-binding subunit ClpX (429 aa).

Residues 1–54 form the ClpX-type ZB domain; that stretch reads MARSKSQKIEGCSFCGRTRAEAEGKIISAKSVAICFECSKICHNLFKEESDKPA. Residues C12, C15, C35, and C38 each coordinate Zn(2+). An ATP-binding site is contributed by 119-126; it reads PTGSGKTL.

This sequence belongs to the ClpX chaperone family. As to quaternary structure, component of the ClpX-ClpP complex. Forms a hexameric ring that, in the presence of ATP, binds to fourteen ClpP subunits assembled into a disk-like structure with a central cavity, resembling the structure of eukaryotic proteasomes.

In terms of biological role, ATP-dependent specificity component of the Clp protease. It directs the protease to specific substrates. Can perform chaperone functions in the absence of ClpP. This is ATP-dependent Clp protease ATP-binding subunit ClpX from Borrelia duttonii (strain Ly).